Here is a 528-residue protein sequence, read N- to C-terminus: MSQPSSDTQRQPAIVILDFGSQYSELIARRVRETEVFSVVLGYSTSAEELRRMAPKGIILSGGPSSVYAEHAPLCDPGIWDLGIPVLGVCYGMQLMVQQLGGVVEAATGKAEYGKAPLEVDDPTDLLTNVDNGSTMWMSHGDSVKALPEGFVRLAHTANTPEAAVAHLQRKLYGVQFHPEVVHSTCGMALIRNFVYHVCGCDPDWTTAAFIDEAVALVREQVGDKRVLLALSGGVDSSTLAFLLKKAIGDQLTCMFIDQGFMRKGEPEFLMDFFDRKFNIHVEYINARQRFIGKLEGITDPEEKRKIIGTEFIRVFEEESKRLGPFDYLAQGTLYPDVIESAGTNVDPKTGERVAVKIKSHHNVGGLPKDLQFKLVEPLRKLFKDEVRKVGRSLGLPEEIVRRHPFPGPGLAIRILGEVTDEKLDCLRDADLIVRQEIKEAGLYHDIWQAFAVLLPVRSVGVMGDKRTYAWPIVLRCVSSEDGMTADWSRLPYDLMETISNRIVNEVKGVNRVVLDITSKPPGTIEWE.

The Glutamine amidotransferase type-1 domain occupies 13–204 (AIVILDFGSQ…VYHVCGCDPD (192 aa)). Catalysis depends on Cys-90, which acts as the Nucleophile. Active-site residues include His-178 and Glu-180. A GMPS ATP-PPase domain is found at 205 to 403 (WTTAAFIDEA…LGLPEEIVRR (199 aa)). Residue 232–238 (SGGVDSS) participates in ATP binding.

Homodimer.

The catalysed reaction is XMP + L-glutamine + ATP + H2O = GMP + L-glutamate + AMP + diphosphate + 2 H(+). Its pathway is purine metabolism; GMP biosynthesis; GMP from XMP (L-Gln route): step 1/1. In terms of biological role, catalyzes the synthesis of GMP from XMP. This Synechococcus sp. (strain CC9605) protein is GMP synthase [glutamine-hydrolyzing].